Consider the following 373-residue polypeptide: Queuine tRNA-ribosyltransferase (373 aa).

The active-site Proton acceptor is the aspartate 94. Residues aspartate 94–phenylalanine 98, aspartate 148, glutamine 190, and glycine 217 contribute to the substrate site. Residues glycine 248–cysteine 254 form an RNA binding region. Catalysis depends on aspartate 267, which acts as the Nucleophile. An RNA binding; important for wobble base 34 recognition region spans residues threonine 272–arginine 276. Residues cysteine 305, cysteine 307, cysteine 310, and histidine 336 each contribute to the Zn(2+) site.

Belongs to the queuine tRNA-ribosyltransferase family. As to quaternary structure, homodimer. Within each dimer, one monomer is responsible for RNA recognition and catalysis, while the other monomer binds to the replacement base PreQ1. Requires Zn(2+) as cofactor.

It catalyses the reaction 7-aminomethyl-7-carbaguanine + guanosine(34) in tRNA = 7-aminomethyl-7-carbaguanosine(34) in tRNA + guanine. It participates in tRNA modification; tRNA-queuosine biosynthesis. Catalyzes the base-exchange of a guanine (G) residue with the queuine precursor 7-aminomethyl-7-deazaguanine (PreQ1) at position 34 (anticodon wobble position) in tRNAs with GU(N) anticodons (tRNA-Asp, -Asn, -His and -Tyr). Catalysis occurs through a double-displacement mechanism. The nucleophile active site attacks the C1' of nucleotide 34 to detach the guanine base from the RNA, forming a covalent enzyme-RNA intermediate. The proton acceptor active site deprotonates the incoming PreQ1, allowing a nucleophilic attack on the C1' of the ribose to form the product. After dissociation, two additional enzymatic reactions on the tRNA convert PreQ1 to queuine (Q), resulting in the hypermodified nucleoside queuosine (7-(((4,5-cis-dihydroxy-2-cyclopenten-1-yl)amino)methyl)-7-deazaguanosine). The polypeptide is Queuine tRNA-ribosyltransferase (Moorella thermoacetica (strain ATCC 39073 / JCM 9320)).